The chain runs to 365 residues: uncharacterized protein (365 aa).

31–38 contacts ATP; sequence GPINSGKT.

Belongs to the archaeal ATPase family.

This is an uncharacterized protein from Methanocaldococcus jannaschii (strain ATCC 43067 / DSM 2661 / JAL-1 / JCM 10045 / NBRC 100440) (Methanococcus jannaschii).